The primary structure comprises 987 residues: Pentatricopeptide repeat-containing protein At1g06710, mitochondrial (987 aa).

Residues 1-42 (MNKTVVRCLLSRSHHPLIHFSTNLSLLHRVFTCSRYLTARFM) constitute a mitochondrion transit peptide. PPR repeat units follow at residues 164–198 (TAPVYNALVDLIVRDDDEKVPEEFLQQIRDDDKEV), 199–233 (FGEFLNVLVRKHCRNGSFSIALEELGRLKDFRFRP), 234–268 (SRSTYNCLIQAFLKADRLDSASLIHREMSLANLRM), 269–299 (DGFTLRCFAYSLCKVGKWREALTLVETENFV), 301–335 (DTVFYTKLISGLCEASLFEEAMDFLNRMRATSCLP), 336–370 (NVVTYSTLLCGCLNKKQLGRCKRVLNMMMMEGCYP), 371–405 (SPKIFNSLVHAYCTSGDHSYAYKLLKKMVKCGHMP), 406–446 (GYVV…GVVL), 447–481 (NKINVSSFTRCLCSAGKYEKAFSVIREMIGQGFIP), 482–516 (DTSTYSKVLNYLCNASKMELAFLLFEEMKRGGLVA), 517–551 (DVYTYTIMVDSFCKAGLIEQARKWFNEMREVGCTP), 552–586 (NVVTYTALIHAYLKAKKVSYANELFETMLSEGCLP), 587–621 (NIVTYSALIDGHCKAGQVEKACQIFERMCGSKDVP), 638–672 (NVVTYGALLDGFCKSHRVEEARKLLDAMSMEGCEP), 673–707 (NQIVYDALIDGLCKVGKLDEAQEVKTEMSEHGFPA), 708–742 (TLYTYSSLIDRYFKVKRQDLASKVLSKMLENSCAP), 743–777 (NVVIYTEMIDGLCKVGKTDEAYKLMQMMEEKGCQP), 778–812 (NVVTYTAMIDGFGMIGKIETCLELLERMGSKGVAP), 813–847 (NYVTYRVLIDHCCKNGALDVAHNLLEEMKQTHWPT), 881–915 (FLSVYRLLIDNLIKAQRLEMALRLLEEVATFSATL), 918–952 (YSSTYNSLIESLCLANKVETAFQLFSEMTKKGVIP), and 953–987 (EMQSFCSLIKGLFRNSKISEALLLLDFISHMVCPL).

The protein belongs to the PPR family. P subfamily.

It localises to the mitochondrion. In Arabidopsis thaliana (Mouse-ear cress), this protein is Pentatricopeptide repeat-containing protein At1g06710, mitochondrial.